Reading from the N-terminus, the 619-residue chain is Probable ATP-dependent RNA helicase DDX59 (619 aa).

Lys-26 is covalently cross-linked (Glycyl lysine isopeptide (Lys-Gly) (interchain with G-Cter in SUMO2)). The interval 57 to 98 is disordered; the sequence is SESCPFPSPGGQLAEVHSVSPEQGAKDSHPSEEPVKSFSKTQ. Phosphoserine occurs at positions 64 and 76. The span at 80 to 91 shows a compositional bias: basic and acidic residues; sequence GAKDSHPSEEPV. Residues 104-133 form an HIT-type zinc finger; that stretch reads GEPICVVCGRYGEYICDKTDEDVCSLECKA. The interval 142 to 161 is disordered; it reads KEEKSKLSNPQKADSEPESP. Phosphoserine is present on residues Ser-156 and Ser-160. The short motif at 203–231 is the Q motif element; sequence IDFEHCSLPEVLNHNLKKSGYEVPTPIQM. One can recognise a Helicase ATP-binding domain in the interval 234–405; sequence IPVGLLGRDI…SQLLHNPVRI (172 aa). ATP is bound at residue 247–254; the sequence is ADTGSGKT. The DEAD box motif lies at 353-356; sequence DEAD. The region spanning 416–579 is the Helicase C-terminal domain; it reads NVRQIILWVE…ILPPQLLNSP (164 aa).

Belongs to the DEAD box helicase family. DDX59 subfamily. Interacts (via HIT-type zinc finger) with the RUVBL1/RUVBL2 complex in the presence of ADP. In terms of tissue distribution, expressed in fibroblasts (at protein level).

Its subcellular location is the cytoplasm. The protein resides in the nucleus. It carries out the reaction ATP + H2O = ADP + phosphate + H(+). The chain is Probable ATP-dependent RNA helicase DDX59 (DDX59) from Homo sapiens (Human).